Here is a 509-residue protein sequence, read N- to C-terminus: L-arabinose isomerase (509 aa).

Mn(2+)-binding residues include E313, E340, H357, and H456.

Belongs to the arabinose isomerase family. Mn(2+) is required as a cofactor.

It catalyses the reaction beta-L-arabinopyranose = L-ribulose. The protein operates within carbohydrate degradation; L-arabinose degradation via L-ribulose; D-xylulose 5-phosphate from L-arabinose (bacterial route): step 1/3. Catalyzes the conversion of L-arabinose to L-ribulose. This is L-arabinose isomerase from Phocaeicola vulgatus (strain ATCC 8482 / DSM 1447 / JCM 5826 / CCUG 4940 / NBRC 14291 / NCTC 11154) (Bacteroides vulgatus).